The chain runs to 147 residues: uncharacterized protein (147 aa).

A helical membrane pass occupies residues 3-23 (APMVGMVVLVVTLGAAVLALS).

The protein to M.tuberculosis Rv1312.

The protein resides in the membrane. This is an uncharacterized protein from Mycobacterium leprae (strain TN).